Here is a 100-residue protein sequence, read N- to C-terminus: MHLTPREFDKLVIHMLSDVALKRKNKGLKLNHPEAVAVLSAYVLDGAREGKTVEEVMDGARSVLKADDVMDGVPDLLPLIQVEAVFSDGSRLVSLHNPIT.

It belongs to the urease gamma subunit family. In terms of assembly, heterotrimer of UreA (gamma), UreB (beta) and UreC (alpha) subunits. Three heterotrimers associate to form the active enzyme.

It is found in the cytoplasm. The catalysed reaction is urea + 2 H2O + H(+) = hydrogencarbonate + 2 NH4(+). Its pathway is nitrogen metabolism; urea degradation; CO(2) and NH(3) from urea (urease route): step 1/1. Its function is as follows. Disrupting the ure2 operon has no effect on urease activity or pathogen survival in BALB/c mice when administered orally. This chain is Urease subunit gamma 2, found in Brucella abortus (strain 2308).